A 596-amino-acid chain; its full sequence is MDAHDLFRRLGVGAKFDLRRFSADAARFQIGKRKYDFDSSEVLQGLDFFGNKKPVPGDCGALRTHQELPDEEKTEESQIERKKQNRKKKKITSEITSEEEVSTIQWISSVEAKIEDKNVKRKNKLTSGKLEQLRKEKLNFFRNKHKIHVQGTDLPDPIATFQQLDQEYKINSRLLQNILDAGFQTPTPIQMQAIPVMLHGRELLASAPTGSGKTLAFSIPILMHLKQPTNKGFRALIISPTRELASQIHRELVKLSEGTGFRIHMIHKAAVAAKKFGPKSSKKFDILVTTPNRLIYLLKQDPPGIDLTSVEWLVVDESDKLFEDGKTGFRDQLASIFLACTSHKVKRAMFSATFAYDVEQWCRLNLDSVITVSVGARNSAVETVEQELLFVGSETGKLLAMRELVKKGFNPPVLVFVQSIERAKELFHELIYEGINVDVIHADRTQQQRDNTVHSFRAGKIWVLICTALLARGIDFKGVNLVINYDFPTSSVEYIHRIGRTGRAGHKGKAVTFFTEDDKPLLRSVANVIQQAGCPVPEYIKGFQKLLSKQKKKMIKKPLERESISTTPKYFLEKAKDKRKKVTGQNKKKVAPEDKS.

Lysine 15 bears the N6-acetyllysine mark. A Phosphoserine modification is found at serine 39. The interval leucine 68 to glutamate 94 is disordered. The short motif at glutamine 163 to methionine 191 is the Q motif element. Residues isoleucine 194–valine 372 enclose the Helicase ATP-binding domain. Alanine 207 to threonine 214 is a binding site for ATP. The DEAD box signature appears at aspartate 316–aspartate 319. The region spanning threonine 383–glutamine 544 is the Helicase C-terminal domain. Positions alanine 575–serine 596 are disordered. A compositionally biased stretch (basic residues) spans aspartate 577–lysine 589.

The protein belongs to the DEAD box helicase family. DDX52/ROK1 subfamily.

The protein resides in the nucleus. The protein localises to the nucleolus. The catalysed reaction is ATP + H2O = ADP + phosphate + H(+). The polypeptide is Probable ATP-dependent RNA helicase DDX52 (DDX52) (Bos taurus (Bovine)).